A 213-amino-acid chain; its full sequence is Receptor-binding cancer antigen expressed on SiSo cells (213 aa).

Topologically, residues 1–6 are extracellular; that stretch reads MAITQF. Residues 7–27 traverse the membrane as a helical; Signal-anchor for type III membrane protein segment; the sequence is RLFKFCTCLATVFSFLKRLIC. Topologically, residues 28 to 213 are cytoplasmic; sequence RSGRGRKLSG…EQNKIGVKLS (186 aa). Ser36 bears the Phosphoserine mark. Thr41 is modified (phosphothreonine). The residue at position 94 (Tyr94) is a Phosphotyrosine. Residues 163-211 adopt a coiled-coil conformation; that stretch reads EDAAWQAEEVLRQQKLADREKRAAEQQRKKMEKEAQRLMKKEQNKIGVK. Over residues 178-206 the composition is skewed to basic and acidic residues; sequence LADREKRAAEQQRKKMEKEAQRLMKKEQN. Positions 178–213 are disordered; sequence LADREKRAAEQQRKKMEKEAQRLMKKEQNKIGVKLS.

In terms of assembly, homodimer. Widely expressed. Expressed in ovary, testis, prostate, thymus, muscle and heart, but not in small intestine, colon, lymph nodes, or peripherical blood lymphocytes. The protein is not detected in any of the above organs.

The protein localises to the golgi apparatus membrane. In terms of biological role, may participate in suppression of cell proliferation and induces apoptotic cell death through activation of interleukin-1-beta converting enzyme (ICE)-like proteases. The polypeptide is Receptor-binding cancer antigen expressed on SiSo cells (EBAG9) (Homo sapiens (Human)).